We begin with the raw amino-acid sequence, 664 residues long: Two-component response regulator ARR2 (664 aa).

The interval 1 to 21 (MVNPGHGRGPDSGTAAGGSNS) is disordered. The region spanning 29–144 (RVLVVDDDPT…ALKNIWQHVV (116 aa)) is the Response regulatory domain. Aspartate 80 bears the 4-aspartylphosphate mark. Residues 151-215 (WNVSEHSGGS…DDKEDSSSLK (65 aa)) are disordered. Residues 165–178 (GGDRDRQQQHREDA) are compositionally biased toward basic and acidic residues. Positions 180-191 (NNSSSVNEGNGR) are enriched in polar residues. Acidic residues predominate over residues 200–209 (EVDDQGDDKE). The Nuclear localization signal signature appears at 215–218 (KKPR). Residues 218–268 (RVVWSVELHQQFVAAVNQLGVDKAVPKKILEMMNVPGLTRENVASHLQKYR) constitute a DNA-binding region (myb-like GARP). Residues 554 to 567 (AAFSTSEAYSSSST) show a composition bias toward low complexity. The segment at 554-589 (AAFSTSEAYSSSSTQRKRRETDATVVGEHGQNLQSP) is disordered.

The protein belongs to the ARR family. Type-B subfamily. In terms of assembly, binds the target DNA as a monomer. Interacts with histidine-containing phosphotransfer proteins. Two-component system major event consists of a His-to-Asp phosphorelay between a sensor histidine kinase (HK) and a response regulator (RR). In plants, the His-to-Asp phosphorelay involves an additional intermediate named Histidine-containing phosphotransfer protein (HPt). This multistep phosphorelay consists of a His-Asp-His-Asp sequential transfer of a phosphate group between first a His and an Asp of the HK protein, followed by the transfer to a conserved His of the HPt protein and finally the transfer to an Asp in the receiver domain of the RR protein. Phosphorylated in response to cytokinin mediated by AHK3. As to expression, detected in the whole plant. Predominantly expressed in pollen.

Its subcellular location is the nucleus. Functionally, transcriptional activator that binds specifically to the DNA sequence 5'-[AG]GATT-3'. Functions as a response regulator involved in His-to-Asp phosphorelay signal transduction system. Phosphorylation of the Asp residue in the receiver domain activates the ability of the protein to promote the transcription of target genes. Could directly activate some type-A response regulators in response to cytokinins. Involved in the expression of nuclear genes for components of mitochondrial complex I. Promotes cytokinin-mediated leaf longevity. Involved in the ethylene signaling pathway in an ETR1-dependent manner and in the cytokinin signaling pathway. This is Two-component response regulator ARR2 (ARR2) from Arabidopsis thaliana (Mouse-ear cress).